Consider the following 418-residue polypeptide: UDP-N-acetylglucosamine 1-carboxyvinyltransferase (418 aa).

Phosphoenolpyruvate is bound at residue 22–23; the sequence is KN. Arg92 is a binding site for UDP-N-acetyl-alpha-D-glucosamine. The active-site Proton donor is Cys116. The residue at position 116 (Cys116) is a 2-(S-cysteinyl)pyruvic acid O-phosphothioketal. Positions 305 and 327 each coordinate UDP-N-acetyl-alpha-D-glucosamine.

The protein belongs to the EPSP synthase family. MurA subfamily.

The protein resides in the cytoplasm. The enzyme catalyses phosphoenolpyruvate + UDP-N-acetyl-alpha-D-glucosamine = UDP-N-acetyl-3-O-(1-carboxyvinyl)-alpha-D-glucosamine + phosphate. Its pathway is cell wall biogenesis; peptidoglycan biosynthesis. Cell wall formation. Adds enolpyruvyl to UDP-N-acetylglucosamine. The sequence is that of UDP-N-acetylglucosamine 1-carboxyvinyltransferase from Endomicrobium trichonymphae.